The chain runs to 201 residues: Peptide deformylase (201 aa).

Cysteine 121 and histidine 163 together coordinate Fe cation. The active site involves glutamate 164. Histidine 167 is a binding site for Fe cation.

Belongs to the polypeptide deformylase family. Requires Fe(2+) as cofactor.

The catalysed reaction is N-terminal N-formyl-L-methionyl-[peptide] + H2O = N-terminal L-methionyl-[peptide] + formate. Functionally, removes the formyl group from the N-terminal Met of newly synthesized proteins. Requires at least a dipeptide for an efficient rate of reaction. N-terminal L-methionine is a prerequisite for activity but the enzyme has broad specificity at other positions. This Synechococcus sp. (strain CC9902) protein is Peptide deformylase.